Here is a 297-residue protein sequence, read N- to C-terminus: tRNA (guanine(37)-N(1))/4-demethylwyosine(37)-methyltransferase Taw22 (297 aa).

S-adenosyl-L-methionine is bound by residues Arg-89, Phe-106, and 128-129; that span reads EL.

This sequence belongs to the class I-like SAM-binding methyltransferase superfamily. TRM5/TYW2 family.

It is found in the cytoplasm. The enzyme catalyses guanosine(37) in tRNA + S-adenosyl-L-methionine = N(1)-methylguanosine(37) in tRNA + S-adenosyl-L-homocysteine + H(+). It carries out the reaction 4-demethylwyosine(37) in tRNA(Phe) + S-adenosyl-L-methionine = isowyosine(37) in tRNA(Phe) + S-adenosyl-L-homocysteine + H(+). Functionally, catalyzes both the N1-methylation of guanosine and the C7-methylation of 4-demethylwyosine (imG-14) at position 37 in tRNA(Phe). The chain is tRNA (guanine(37)-N(1))/4-demethylwyosine(37)-methyltransferase Taw22 from Nanoarchaeum equitans (strain Kin4-M).